A 1589-amino-acid polypeptide reads, in one-letter code: MDRRALKFMQKRADTESDTTTPVSTTASQGISASAILAGGTLPLKDNSNIREKPLHHNYNHNNNNSSQHSHSHQQQQQQQVGGKQLERPLKCLETLAQKAGITFDEKYDVASPPHPGIAQQQATSGTGPATGSGSVTPTSHRHGTPPTGRRQTHTPSTPNRPSAPSTPNTNCNSIARHTSLTLEKAQNPGQQVAATTTVPLQISPEQLQQFYASNPYAIQVKQEFPTHTTSGSGTELKHATNIMEVQQQLQLQQQLSEANGGGAASAGAGGAASPANSQQSQQQQHSTAISTMSPMQLAAATGGVGGDWTQGRTVQLMQPSTSFLYPQMIVSGNLLHPGGLGQQPIQVITAGKPFQGNGPQMLTTTTQNAKQMIGGQAGFAGGNYATCIPTNHNQSPQTVLFSPMNVISPQQQQNLLQSMAAAAQQQQLTQQQQQFNQQQQQQLTQQQQQLTAALAKVGVDAQGKLAQKVVQKVTTTSSAVQAATGPGSTGSTQTQQVQQVQQQQQQTTQTTQQCVQVSQSTLPVGVGGQSVQTAQLLNAGQAQQMQIPWFLQNAAGLQPFGPNQIILRNQPDGTQGMFIQQQPATQTLQTQQNQIIQCNVTQTPTKARTQLDALAPKQQQQQQQVGTTNQTQQQQLAVATAQLQQQQQQLTAAALQRPGAPVMPHNGTQVRPASSVSTQTAQNQSLLKAKMRNKQQPVRPALATLKTEIGQVAGQNKVVGHLTTVQQQQQATNLQQVVNAAGNKMVVMSTTGTPITLQNGQTLHAATAAGVDKQQQQLQLFQKQQILQQQQMLQQQIAAIQMQQQQAAVQAQQQQQQQVSQQQQVNAQQQQAVAQQQQAVAQAQQQQREQQQQVAQAQAQHQQALANATQQILQVAPNQFITSHQQQQQQQLHNQLIQQQLQQQAQAQVQAQVQAQAQQQQQQREQQQNIIQQIVVQQSGATSQQTSQQQQHHQSGQLQLSSVPFSVSSSTTPAGIATSSALQAALSASGAIFQTAKPGTCSSSSPTSSVVTITNQSSTPLVTSSTVASIQQAQTQSAQVHQHQQLISATIAGGTQQQPQGPPSLTPTTNPILAMTSMMNATVGHLSTAPPVTVSVTSTAVTSSPGQLVLLSTASSGGGGSIPATPTKETPSKGPTATLVPIGSPKTPVSGKDTCTTPKSSTPATVSASVEASSSTGEALSNGDASDRSSTPSKGATTPTSKQSNAAVQPPSSTTPNSVSGKEEPKLATCGSLTSATSTSTTTTITNGIGVARTTASTAVSTASTTTTSSGTFITSCTSTTTTTTSSISNGSKDLPKAMIKPNVLTHVIDGFIIQEANEPFPVTRQRYADKDVSDEPPKKKATMQEDIKLSGIASAPGSDMVACEQCGKMEHKAKLKRKRYCSPGCSRQAKNGIGGVGSGETNGLGTGGIVGVDAMALVDRLDEAMAEEKMQTEATPKLSESFPILGASTEVPPMSLPVQAAISAPSPLAMPLGSPLSVALPTLAPLSVVTSGAAPKSSEVNGTDRPPISSWSVDDVSNFIRELPGCQDYVDDFIQQEIDGQALLLLKEKHLVNAMGMKLGPALKIVAKVESIKEVPPPGEAKDPGAQ.

Residues Met1 to Thr15 are compositionally biased toward basic and acidic residues. 5 disordered regions span residues Met1 to Gln85, Lys107 to Ser174, Leu252 to Ile290, Leu1112 to Thr1244, and Ala1260 to Lys1294. Composition is skewed to low complexity over residues Asp18–Ser28, Asn60–Gln80, and Ala119–Thr139. Polar residues predominate over residues His154–Ser174. A compositionally biased stretch (gly residues) spans Asn260–Gly271. The span at Ala272–Gln285 shows a compositional bias: low complexity. Ser1145 is subject to Phosphoserine. Position 1148 is a phosphothreonine (Thr1148). Low complexity predominate over residues Thr1157 to Ala1180. The segment covering Arg1189–Ser1221 has biased composition (polar residues). Low complexity-rich tracts occupy residues Thr1230 to Thr1244 and Ala1260 to Ser1290. An FCS-type zinc finger spans residues Ser1356 to Arg1389. Positions 1365, 1368, 1383, and 1387 each coordinate Zn(2+). Positions Trp1513–Val1577 constitute an SAM domain.

In terms of assembly, component of PRC1 complex, which contains many PcG proteins like Pc, ph, Scm, Psc, Sce and also chromatin-remodeling proteins such as histone deacetylases. This complex is distinct from the Esc/E(z) complex, at least composed of esc, E(z), Su(z)12, HDAC1/Rpd3 and Caf1-55. The 2 complexes however cooperate and interact together during the first 3 hours of development to establish PcG silencing. Interacts with the SAM domain of Scm via its SAM domain in vitro. Interacts with Trl in vivo and with corto in vitro. In terms of tissue distribution, salivary glands.

The protein resides in the nucleus. In terms of biological role, polycomb group (PcG) protein. PcG proteins act by forming multiprotein complexes, which are required to maintain the transcriptionally repressive state of homeotic genes throughout development. PcG proteins are not required to initiate repression, but to maintain it during later stages of development. Component of the PcG multiprotein PRC1 complex, a complex that acts via chromatin remodeling and modification of histones; it mediates monoubiquitination of histone H2A 'Lys-118', rendering chromatin heritably changed in its expressibility. Plays a role in regulating the expression of other pair-rule genes such as eve, ftz, and H. The sequence is that of Polyhomeotic-proximal chromatin protein (ph-p) from Drosophila melanogaster (Fruit fly).